The chain runs to 194 residues: Putative manganese efflux pump MntP (194 aa).

The next 6 membrane-spanning stretches (helical) occupy residues 3 to 23, 37 to 57, 69 to 89, 110 to 132, 147 to 167, and 172 to 192; these read PFSIVLIGFAMSTDAFAAAIG, LRAGLIFGCIEAITPVIGWLL, DHWIAFVLLGALGTHMIVAGL, LGLATTGFATSIDAMAVGVSLAF, CTFSMVTAGVMLGRALGNLIG, and MLGGLILVIVGSVILYEHLSG.

Belongs to the MntP (TC 9.B.29) family.

The protein resides in the cell inner membrane. In terms of biological role, probably functions as a manganese efflux pump. The protein is Putative manganese efflux pump MntP of Xanthomonas axonopodis pv. citri (strain 306).